A 625-amino-acid polypeptide reads, in one-letter code: RecQ-mediated genome instability protein 1 (625 aa).

N-acetylmethionine is present on Met-1. Phosphoserine is present on Ser-225. Positions 257–282 (LTANNDTSSERCFTTGSSSNTIPTRQ) are disordered. 2 positions are modified to phosphoserine: Ser-284 and Ser-292. Residues Lys-334, Lys-387, and Lys-426 each participate in a glycyl lysine isopeptide (Lys-Gly) (interchain with G-Cter in SUMO2) cross-link.

It belongs to the RMI1 family. In terms of assembly, component of the RMI complex, containing at least TOP3A, RMI1 and RMI2. The RMI complex interacts with BLM. Directly interacts with RMI2 and TOP3A. May bind DHJ. Interacts (via N-terminal region) with BLM; the interaction is direct.

It localises to the nucleus. Essential component of the RMI complex, a complex that plays an important role in the processing of homologous recombination intermediates to limit DNA crossover formation in cells. Promotes TOP3A binding to double Holliday junctions (DHJ) and hence stimulates TOP3A-mediated dissolution. Required for BLM phosphorylation during mitosis. Within the BLM complex, required for BLM and TOP3A stability. In Homo sapiens (Human), this protein is RecQ-mediated genome instability protein 1 (RMI1).